The following is a 1002-amino-acid chain: E3 ubiquitin-protein ligase BRE1B (1002 aa).

The tract at residues 1 to 32 (MSGLSNKRAAGDGGSGPPEKKLNREEKTTTTL) is disordered. Residues 18 to 28 (PEKKLNREEKT) show a composition bias toward basic and acidic residues. Lys-20 carries the post-translational modification N6-acetyllysine. Ser-42 is modified (phosphoserine). Residues 55 to 91 (KNKKLAERLEQRQACEDELRERIEKLEKRQATDDATL) adopt a coiled-coil conformation. The disordered stretch occupies residues 120–148 (SSGTEVPGCQEGLTRDVIPRTDPGTSDLR). 2 coiled-coil regions span residues 190–378 (KAAV…LRSL) and 438–526 (LQKK…ASGS). An N6-acetyllysine mark is found at Lys-356 and Lys-518. Disordered regions lie at residues 520 to 562 (RAQA…PDSK) and 579 to 652 (KKEE…ESEL). Residues Lys-579 and Lys-580 each participate in a glycyl lysine isopeptide (Lys-Gly) (interchain with G-Cter in SUMO2) cross-link. 2 positions are modified to phosphoserine: Ser-585 and Ser-586. 2 stretches are compositionally biased toward basic and acidic residues: residues 603–620 (RGRE…EREG) and 634–652 (RADR…ESEL). Residues 628–947 (AASTLSRADR…EEIKEYKARL (320 aa)) are a coiled coil. Residues 949–988 (CPCCNTRKKDAVLTKCFHVFCFECVRGRYEARQRKCPKCN) form an RING-type zinc finger.

The protein belongs to the BRE1 family. Component of the RNF20/40 complex (also known as BRE1 complex) probably composed of 2 copies of RNF20/BRE1A and 2 copies of RNF40/BRE1B. Interacts with UBE2E1/UBCH6. Interacts with RB1 and WAC. May interact with STX1A. As to expression, ubiquitously expressed. Expressed in brain, testis, heart, liver and kidney. Weakly expressed in lung, spleen and skeletal muscle (at protein level).

The protein localises to the nucleus. The catalysed reaction is S-ubiquitinyl-[E2 ubiquitin-conjugating enzyme]-L-cysteine + [acceptor protein]-L-lysine = [E2 ubiquitin-conjugating enzyme]-L-cysteine + N(6)-ubiquitinyl-[acceptor protein]-L-lysine.. The protein operates within protein modification; protein ubiquitination. Component of the RNF20/40 E3 ubiquitin-protein ligase complex that mediates monoubiquitination of 'Lys-120' of histone H2B (H2BK120ub1). H2BK120ub1 gives a specific tag for epigenetic transcriptional activation and is also prerequisite for histone H3 'Lys-4' and 'Lys-79' methylation (H3K4me and H3K79me, respectively). It thereby plays a central role in histone code and gene regulation. The RNF20/40 complex forms a H2B ubiquitin ligase complex in cooperation with the E2 enzyme UBE2A or UBE2B; reports about the cooperation with UBE2E1/UBCH are contradictory. Required for transcriptional activation of Hox genes. The sequence is that of E3 ubiquitin-protein ligase BRE1B (Rnf40) from Rattus norvegicus (Rat).